We begin with the raw amino-acid sequence, 310 residues long: Small ribosomal subunit protein uS2 (310 aa).

Disordered regions lie at residues 213-240 and 271-310; these read EEQA…GGAA and WDSV…TDWA. A compositionally biased stretch (low complexity) spans 216–227; the sequence is AALARQQEEANA. Polar residues predominate over residues 297–310; the sequence is VTMQEQAKPSTDWA.

The protein belongs to the universal ribosomal protein uS2 family. As to quaternary structure, component of the small ribosomal subunit. Mature ribosomes consist of a small (40S) and a large (60S) subunit. The 40S subunit contains about 33 different proteins and 1 molecule of RNA (18S). The 60S subunit contains about 49 different proteins and 3 molecules of RNA (28S, 5.8S and 5S). Interacts with ribosomal protein S21.

It is found in the cytoplasm. Its function is as follows. Required for the assembly and/or stability of the 40S ribosomal subunit. Required for the processing of the 20S rRNA-precursor to mature 18S rRNA in a late step of the maturation of 40S ribosomal subunits. In Nematostella vectensis (Starlet sea anemone), this protein is Small ribosomal subunit protein uS2.